Reading from the N-terminus, the 352-residue chain is Protein RecA (352 aa).

67–74 (GPESSGKT) lines the ATP pocket.

Belongs to the RecA family.

It is found in the cytoplasm. Can catalyze the hydrolysis of ATP in the presence of single-stranded DNA, the ATP-dependent uptake of single-stranded DNA by duplex DNA, and the ATP-dependent hybridization of homologous single-stranded DNAs. It interacts with LexA causing its activation and leading to its autocatalytic cleavage. In Chlamydia trachomatis serovar D (strain ATCC VR-885 / DSM 19411 / UW-3/Cx), this protein is Protein RecA.